A 288-amino-acid chain; its full sequence is Oxaloacetate decarboxylase (288 aa).

Residue S47 participates in substrate binding. Position 85 (D85) interacts with Mg(2+). Residues R156 and H232 each coordinate substrate.

It belongs to the isocitrate lyase/PEP mutase superfamily. Oxaloacetate decarboxylase family. As to quaternary structure, homotetramer; dimer of dimers. It depends on Mg(2+) as a cofactor.

The catalysed reaction is oxaloacetate + H(+) = pyruvate + CO2. Functionally, catalyzes the decarboxylation of oxaloacetate into pyruvate. Seems to play a role in maintaining cellular concentrations of bicarbonate and pyruvate. The polypeptide is Oxaloacetate decarboxylase (Bradyrhizobium diazoefficiens (strain JCM 10833 / BCRC 13528 / IAM 13628 / NBRC 14792 / USDA 110)).